The primary structure comprises 131 residues: D-ribose pyranase (131 aa).

Histidine 20 acts as the Proton donor in catalysis. Substrate contacts are provided by residues aspartate 28, histidine 98, and 120 to 122; that span reads YAN.

It belongs to the RbsD / FucU family. RbsD subfamily. As to quaternary structure, homodecamer.

It localises to the cytoplasm. It carries out the reaction beta-D-ribopyranose = beta-D-ribofuranose. It participates in carbohydrate metabolism; D-ribose degradation; D-ribose 5-phosphate from beta-D-ribopyranose: step 1/2. In terms of biological role, catalyzes the interconversion of beta-pyran and beta-furan forms of D-ribose. This is D-ribose pyranase from Bacillus cytotoxicus (strain DSM 22905 / CIP 110041 / 391-98 / NVH 391-98).